The primary structure comprises 1088 residues: RNA-directed RNA polymerase (1088 aa).

The 187-residue stretch at 501 to 687 (LSYGDVTRFL…AKRYIAGGKI (187 aa)) folds into the RdRp catalytic domain.

Belongs to the reoviridae RNA-directed RNA polymerase family. In terms of assembly, interacts with VP3 (Potential). Interacts with VP2; this interaction activates VP1. Interacts with NSP5; this interaction is probably necessary for the formation of functional virus factories. Interacts with NSP2; this interaction is weak. Requires Mg(2+) as cofactor.

The protein resides in the virion. The catalysed reaction is RNA(n) + a ribonucleoside 5'-triphosphate = RNA(n+1) + diphosphate. In terms of biological role, RNA-directed RNA polymerase that is involved in both transcription and genome replication. Together with VP3 capping enzyme, forms an enzyme complex positioned near the channels situated at each of the five-fold vertices of the core. Following infection, the outermost layer of the virus is lost, leaving a double-layered particle (DLP) made up of the core and VP6 shell. VP1 then catalyzes the transcription of fully conservative plus-strand genomic RNAs that are extruded through the DLP's channels into the cytoplasm where they function as mRNAs for translation of viral proteins. One copy of each of the viral (+)RNAs is also recruited during core assembly, together with newly synthesized polymerase complexes and VP2. The polymerase of these novo-formed particles catalyzes the synthesis of complementary minus-strands leading to dsRNA formation. To do so, the polymerase specifically recognizes and binds 4 bases 5'-UGUG-3' in the conserved 3'-sequence of plus-strand RNA templates. VP2 presumably activates the autoinhibited VP1-RNA complex to coordinate packaging and genome replication. Once dsRNA synthesis is complete, the polymerase switches to the transcriptional mode, thus providing secondary transcription. In Rotavirus A (isolate RVA/Human/United States/WI61/1983/G9P1A[8]) (RV-A), this protein is RNA-directed RNA polymerase.